The following is a 351-amino-acid chain: V-type proton ATPase subunit d1 (351 aa).

It belongs to the V-ATPase V0D/AC39 subunit family. As to quaternary structure, V-ATPase is a heteromultimeric enzyme composed of a peripheral catalytic V1 complex (components A to H) attached to an integral membrane V0 proton pore complex (components: a, c, c'', d and e).

It is found in the vacuole membrane. Functionally, subunit of the integral membrane V0 complex of vacuolar ATPase. Vacuolar ATPase is responsible for acidifying a variety of intracellular compartments in eukaryotic cells, thus providing most of the energy required for transport processes in the vacuolar system. This chain is V-type proton ATPase subunit d1 (VHA-d1), found in Arabidopsis thaliana (Mouse-ear cress).